We begin with the raw amino-acid sequence, 451 residues long: tRNA-2-methylthio-N(6)-dimethylallyladenosine synthase (451 aa).

Residues 6–122 (RRYHIITFGC…LDQLLEQVWA (117 aa)) form the MTTase N-terminal domain. [4Fe-4S] cluster contacts are provided by Cys15, Cys51, Cys85, Cys157, Cys161, and Cys164. The Radical SAM core domain maps to 143 to 384 (RESTVSAWVN…STQAMERSQR (242 aa)). Positions 383–447 (QRYLGRVEEV…AFSLTGEALS (65 aa)) constitute a TRAM domain.

The protein belongs to the methylthiotransferase family. MiaB subfamily. In terms of assembly, monomer. Requires [4Fe-4S] cluster as cofactor.

It localises to the cytoplasm. It carries out the reaction N(6)-dimethylallyladenosine(37) in tRNA + (sulfur carrier)-SH + AH2 + 2 S-adenosyl-L-methionine = 2-methylsulfanyl-N(6)-dimethylallyladenosine(37) in tRNA + (sulfur carrier)-H + 5'-deoxyadenosine + L-methionine + A + S-adenosyl-L-homocysteine + 2 H(+). Catalyzes the methylthiolation of N6-(dimethylallyl)adenosine (i(6)A), leading to the formation of 2-methylthio-N6-(dimethylallyl)adenosine (ms(2)i(6)A) at position 37 in tRNAs that read codons beginning with uridine. The protein is tRNA-2-methylthio-N(6)-dimethylallyladenosine synthase of Synechocystis sp. (strain ATCC 27184 / PCC 6803 / Kazusa).